Here is a 154-residue protein sequence, read N- to C-terminus: Large-conductance mechanosensitive channel (154 aa).

2 helical membrane-spanning segments follow: residues 12–32 (GNIV…ALIT) and 71–91 (IVLS…FLVV). The tract at residues 129 to 154 (NGAPSGRHVDTADLTPTPNHEPRADT) is disordered.

It belongs to the MscL family. In terms of assembly, homopentamer.

It localises to the cell membrane. Channel that opens in response to stretch forces in the membrane lipid bilayer. May participate in the regulation of osmotic pressure changes within the cell. In Mycobacterium leprae (strain Br4923), this protein is Large-conductance mechanosensitive channel.